We begin with the raw amino-acid sequence, 144 residues long: Large ribosomal subunit protein uL15 (144 aa).

The segment at 1 to 54 (MKLNTIKPAEGAKHARRRVGRGIGSGLGKTGGRGHKGQKSRAGGFHKVGFEGGQ) is disordered. The span at 21-31 (RGIGSGLGKTG) shows a compositional bias: gly residues.

The protein belongs to the universal ribosomal protein uL15 family. In terms of assembly, part of the 50S ribosomal subunit.

Binds to the 23S rRNA. This is Large ribosomal subunit protein uL15 from Methylobacillus flagellatus (strain ATCC 51484 / DSM 6875 / VKM B-1610 / KT).